We begin with the raw amino-acid sequence, 443 residues long: Amino-acid acetyltransferase (443 aa).

The 148-residue stretch at 296 to 443 folds into the N-acetyltransferase domain; it reads EQIRRATIND…RSKVLMADLG (148 aa).

Belongs to the acetyltransferase family. ArgA subfamily. In terms of assembly, homohexamer.

It is found in the cytoplasm. The enzyme catalyses L-glutamate + acetyl-CoA = N-acetyl-L-glutamate + CoA + H(+). It participates in amino-acid biosynthesis; L-arginine biosynthesis; N(2)-acetyl-L-ornithine from L-glutamate: step 1/4. The protein is Amino-acid acetyltransferase (argA) of Salmonella typhi.